The sequence spans 465 residues: Iron-sulfur cluster assembly SufBD family protein SSP1857 (465 aa).

Belongs to the iron-sulfur cluster assembly SufBD family.

This is Iron-sulfur cluster assembly SufBD family protein SSP1857 from Staphylococcus saprophyticus subsp. saprophyticus (strain ATCC 15305 / DSM 20229 / NCIMB 8711 / NCTC 7292 / S-41).